A 475-amino-acid chain; its full sequence is Eukaryotic translation initiation factor 3 subunit L (475 aa).

A PCI domain is found at 257–451 (DAIRMFSHIL…DLDYAMQGDL (195 aa)).

Belongs to the eIF-3 subunit L family. In terms of assembly, component of the eukaryotic translation initiation factor 3 (eIF-3) complex.

Its subcellular location is the cytoplasm. Component of the eukaryotic translation initiation factor 3 (eIF-3) complex, which is involved in protein synthesis of a specialized repertoire of mRNAs and, together with other initiation factors, stimulates binding of mRNA and methionyl-tRNAi to the 40S ribosome. The eIF-3 complex specifically targets and initiates translation of a subset of mRNAs involved in cell proliferation. In Sclerotinia sclerotiorum (strain ATCC 18683 / 1980 / Ss-1) (White mold), this protein is Eukaryotic translation initiation factor 3 subunit L.